The following is a 193-amino-acid chain: Interferon type A1/A2 (193 aa).

A signal peptide spans 1–31 (MAVPASPQHPRGYGILLLTLLLKALATTASA). 3 disulfide bridges follow: Cys32–Cys129, Cys61–Cys155, and Cys68–Cys168. Asn65, Asn71, Asn108, and Asn186 each carry an N-linked (GlcNAc...) asparagine glycan.

It belongs to the alpha/beta interferon family.

It is found in the secreted. In terms of biological role, has antiviral activities. This Gallus gallus (Chicken) protein is Interferon type A1/A2 (IFNA1).